Here is a 252-residue protein sequence, read N- to C-terminus: Indole-3-glycerol phosphate synthase (252 aa).

The protein belongs to the TrpC family.

It catalyses the reaction 1-(2-carboxyphenylamino)-1-deoxy-D-ribulose 5-phosphate + H(+) = (1S,2R)-1-C-(indol-3-yl)glycerol 3-phosphate + CO2 + H2O. Its pathway is amino-acid biosynthesis; L-tryptophan biosynthesis; L-tryptophan from chorismate: step 4/5. This chain is Indole-3-glycerol phosphate synthase, found in Bacillus licheniformis (strain ATCC 14580 / DSM 13 / JCM 2505 / CCUG 7422 / NBRC 12200 / NCIMB 9375 / NCTC 10341 / NRRL NRS-1264 / Gibson 46).